The chain runs to 227 residues: Urease accessory protein UreE (227 aa).

A disordered region spans residues 192 to 227; it reads PHGSGLHVHAIHSHGHSHSHDHDHDHNHDHDHKHKQ. Positions 209 to 221 are enriched in basic and acidic residues; that stretch reads HSHDHDHDHNHDH.

This sequence belongs to the UreE family.

It localises to the cytoplasm. Involved in urease metallocenter assembly. Binds nickel. Probably functions as a nickel donor during metallocenter assembly. This Yersinia bercovieri protein is Urease accessory protein UreE.